We begin with the raw amino-acid sequence, 148 residues long: Calmodulin (148 aa).

An N-acetylalanine modification is found at Ala2. 4 EF-hand domains span residues 8–43, 44–79, 81–116, and 116–148; these read DQISEFKEAFSLFDKDGDGCITTKELGTVMRSLGQN, PTEAELQDMINEVDRDGNGTIDFPEFLNLMARKMKD, DSEEELKEAFRVFDKDQNGFISAAELRHVMTNLGEK, and KLTDEVDEMIREADVDGDGQINYEEFVKVMMAK. Asp21, Asp23, Asp25, Cys27, Glu32, Asp57, Asp59, Asn61, Thr63, Glu68, Asp94, Asp96, Asn98, and Glu105 together coordinate Ca(2+). The residue at position 116 (Lys116) is an N6,N6,N6-trimethyllysine. The Ca(2+) site is built by Asp129, Asp131, Asp133, Gln135, and Glu140.

This sequence belongs to the calmodulin family.

Its function is as follows. Calmodulin mediates the control of a large number of enzymes, ion channels and other proteins by Ca(2+). Among the enzymes to be stimulated by the calmodulin-Ca(2+) complex are a number of protein kinases and phosphatases. This is Calmodulin (CAMF1) from Fagus sylvatica (Beechnut).